The primary structure comprises 292 residues: 4-hydroxy-tetrahydrodipicolinate synthase (292 aa).

Pyruvate is bound at residue T45. Y133 functions as the Proton donor/acceptor in the catalytic mechanism. The active-site Schiff-base intermediate with substrate is the K162. I204 is a binding site for pyruvate.

Belongs to the DapA family. In terms of assembly, homotetramer; dimer of dimers.

The protein localises to the cytoplasm. The enzyme catalyses L-aspartate 4-semialdehyde + pyruvate = (2S,4S)-4-hydroxy-2,3,4,5-tetrahydrodipicolinate + H2O + H(+). It participates in amino-acid biosynthesis; L-lysine biosynthesis via DAP pathway; (S)-tetrahydrodipicolinate from L-aspartate: step 3/4. In terms of biological role, catalyzes the condensation of (S)-aspartate-beta-semialdehyde [(S)-ASA] and pyruvate to 4-hydroxy-tetrahydrodipicolinate (HTPA). This Oleidesulfovibrio alaskensis (strain ATCC BAA-1058 / DSM 17464 / G20) (Desulfovibrio alaskensis) protein is 4-hydroxy-tetrahydrodipicolinate synthase.